A 486-amino-acid chain; its full sequence is Ribosomal RNA small subunit methyltransferase F (486 aa).

S-adenosyl-L-methionine contacts are provided by residues 124–130 (ASAPGSK), E148, D175, and D193. C246 acts as the Nucleophile in catalysis.

The protein belongs to the class I-like SAM-binding methyltransferase superfamily. RsmB/NOP family.

Its subcellular location is the cytoplasm. It carries out the reaction cytidine(1407) in 16S rRNA + S-adenosyl-L-methionine = 5-methylcytidine(1407) in 16S rRNA + S-adenosyl-L-homocysteine + H(+). Functionally, specifically methylates the cytosine at position 1407 (m5C1407) of 16S rRNA. This is Ribosomal RNA small subunit methyltransferase F from Shewanella baltica (strain OS155 / ATCC BAA-1091).